Consider the following 468-residue polypeptide: Peroxisome proliferator-activated receptor alpha (468 aa).

A DNA-binding region (nuclear receptor) is located at residues 99–173; sequence NIECRICGDK…VGMSHNAIRF (75 aa). NR C4-type zinc fingers lie at residues 102–122 and 139–161; these read CRIC…CEGC and CDRS…FHKC. An NR LBD domain is found at 239–466; it reads FVIHDMETLC…HPLLQEIYRD (228 aa). Indeglitazar contacts are provided by S280, Y314, and Y464. The required for heterodimerization with RXRA stretch occupies residues 304–433; it reads DQVTLLKYGV…PKLLQKMADL (130 aa).

It belongs to the nuclear hormone receptor family. NR1 subfamily. As to quaternary structure, heterodimer; with RXRA. This heterodimerization is required for DNA binding and transactivation activity. Interacts with NCOA3 coactivator. Interacts with CITED2; the interaction stimulates its transcriptional activity. Also interacts with PPARBP in vitro. Interacts with AKAP13, LPIN1, PRDM16 and coactivator NCOA6. Interacts with ASXL1 and ASXL2. Interacts with PER2. Interacts with SIRT1; the interaction seems to be modulated by NAD(+) levels. Interacts with CRY1 and CRY2. In hepatocytes, interacts with PAQR3 and HUWE1; the interactions promote PPARA poylubiquitination and HUWE1-mediated degradation. Ubiquitinated by E3 ubiquitin-protein ligase HUWE1; leading to proteasomal degradation. Post-translationally, phosphorylated. Skeletal muscle, liver, heart and kidney. Expressed in monocytes.

It is found in the nucleus. Ligand-activated transcription factor. Key regulator of lipid metabolism. Activated by the endogenous ligand 1-palmitoyl-2-oleoyl-sn-glycerol-3-phosphocholine (16:0/18:1-GPC). Activated by oleylethanolamide, a naturally occurring lipid that regulates satiety. Receptor for peroxisome proliferators such as hypolipidemic drugs and fatty acids. Regulates the peroxisomal beta-oxidation pathway of fatty acids. Functions as a transcription activator for the ACOX1 and P450 genes. Transactivation activity requires heterodimerization with RXRA and is antagonized by NR2C2. May be required for the propagation of clock information to metabolic pathways regulated by PER2. This chain is Peroxisome proliferator-activated receptor alpha (PPARA), found in Homo sapiens (Human).